A 231-amino-acid polypeptide reads, in one-letter code: Uridylate cyclase (231 aa).

A Guanylate cyclase domain is found at 46–178 (TVLYADLDGS…RAANYAAKLT (133 aa)). A ribonucleoside 5'-triphosphate is bound at residue tyrosine 49. Residues aspartate 51 and aspartate 95 each contribute to the Mn(2+) site. A ribonucleoside 5'-triphosphate is bound at residue arginine 96.

Belongs to the adenylyl cyclase class-4/guanylyl cyclase family. Pyrimidine cyclase subfamily. As to quaternary structure, homodimer. It depends on Mn(2+) as a cofactor.

It localises to the cytoplasm. The enzyme catalyses UTP = 3',5'-cyclic UMP + diphosphate. In terms of biological role, pycsar (pyrimidine cyclase system for antiphage resistance) provides immunity against bacteriophage. The pyrimidine cyclase (PycC) synthesizes cyclic nucleotides in response to infection; these serve as specific second messenger signals. The signal activates the adjacent effector, leading to bacterial cell death and abortive phage infection. A clade B Pycsar system. Functionally, the pyrimidine cyclase gene of a two-gene Pycsar system, generates cyclic UMP (cUMP) from UTP probably in response to bacteriophage infection. Expression of this and adjacent effector XpPycTIR (AC P0DV29) confers resistance to bacteriophage T7. When cells expressing the Pycsar system are infected phage T7 at low multiplicity of infection (0.2 MOI) the culture survives, at 2.0 MOI bacteria enter growth arrest. The same cells enter growth arrest after exposure to 2.5 mM cUMP but not cCMP; the effector protein responds only to the cUMP produced by its cognate NTP cyclase. The chain is Uridylate cyclase from Xanthomonas perforans.